The chain runs to 192 residues: Xanthine phosphoribosyltransferase (192 aa).

Xanthine contacts are provided by leucine 20 and asparagine 27. 5-phospho-alpha-D-ribose 1-diphosphate is bound at residue 128 to 132 (ANGDA). Lysine 156 contributes to the xanthine binding site.

It belongs to the purine/pyrimidine phosphoribosyltransferase family. Xpt subfamily. As to quaternary structure, homodimer.

It localises to the cytoplasm. It carries out the reaction XMP + diphosphate = xanthine + 5-phospho-alpha-D-ribose 1-diphosphate. Its pathway is purine metabolism; XMP biosynthesis via salvage pathway; XMP from xanthine: step 1/1. Its function is as follows. Converts the preformed base xanthine, a product of nucleic acid breakdown, to xanthosine 5'-monophosphate (XMP), so it can be reused for RNA or DNA synthesis. In Staphylococcus aureus (strain Mu3 / ATCC 700698), this protein is Xanthine phosphoribosyltransferase.